Reading from the N-terminus, the 355-residue chain is Beta-porphyranase C (355 aa).

A signal peptide spans 1-18; the sequence is MIKTLKRIPLVFLIAIMA. Cys-19 carries N-palmitoyl cysteine lipidation. Cys-19 carries S-diacylglycerol cysteine lipidation. Positions 22 to 72 are disordered; that stretch reads SGDNGKDKVEEQEQAQEQGEKKGQGEERDKEDGIDGLQPTFLADQDPKPDD. The segment covering 39 to 54 has biased composition (basic and acidic residues); it reads QGEKKGQGEERDKEDG. The GH16 domain maps to 71 to 355; it reads DDKKWIKVEG…WVRVWQLEDL (285 aa). Trp-110, Glu-208, and Glu-213 together coordinate substrate. Catalysis depends on Glu-208, which acts as the Nucleophile. Catalysis depends on Glu-213, which acts as the Proton donor.

The protein belongs to the glycosyl hydrolase 16 family.

The protein resides in the cell outer membrane. The enzyme catalyses Hydrolysis of beta-D-galactopyranose-(1-&gt;4)-alpha-L-galactopyranose-6-sulfate linkages in porphyran.. Its function is as follows. Cleaves the sulfated polysaccharide porphyran at the (1-&gt;4) linkages between beta-D-galactopyranose and alpha-L-galactopyranose-6-sulfate, forming mostly the disaccharide alpha-L-galactopyranose-6-sulfate-(1-&gt;3)-beta-D-galactose. This Zobellia galactanivorans (strain DSM 12802 / CCUG 47099 / CIP 106680 / NCIMB 13871 / Dsij) protein is Beta-porphyranase C (porC).